A 736-amino-acid chain; its full sequence is DNA topoisomerase 1 (736 aa).

Residues 2–113 (KHLIIVESPA…SYPRIVFHEI (112 aa)) form the Toprim domain. Residues Glu8 and Asp82 each coordinate Mg(2+). The Topo IA-type catalytic domain occupies 129 to 552 (DMSKVNAQQA…DFYYPFMDKI (424 aa)). Residues 163–168 (SAGRVQ) form an interaction with DNA region. Catalysis depends on Tyr297, which acts as the O-(5'-phospho-DNA)-tyrosine intermediate. 4 C4-type zinc fingers span residues 572 to 598 (CPKCGGELVKKNSRYGEFIACNNYPKC), 616 to 642 (CEKCGGEMVQKFSRNGAFLACNNYPEC), 663 to 689 (CPECGGDIALKRSKKGSFYGCNNYPKC), and 702 to 725 (CEKCHYLMSERIYRKKKAHECIKC).

Belongs to the type IA topoisomerase family. As to quaternary structure, monomer. Mg(2+) serves as cofactor.

It carries out the reaction ATP-independent breakage of single-stranded DNA, followed by passage and rejoining.. Releases the supercoiling and torsional tension of DNA, which is introduced during the DNA replication and transcription, by transiently cleaving and rejoining one strand of the DNA duplex. Introduces a single-strand break via transesterification at a target site in duplex DNA. The scissile phosphodiester is attacked by the catalytic tyrosine of the enzyme, resulting in the formation of a DNA-(5'-phosphotyrosyl)-enzyme intermediate and the expulsion of a 3'-OH DNA strand. The free DNA strand then undergoes passage around the unbroken strand, thus removing DNA supercoils. Finally, in the religation step, the DNA 3'-OH attacks the covalent intermediate to expel the active-site tyrosine and restore the DNA phosphodiester backbone. In Helicobacter pylori (strain ATCC 700392 / 26695) (Campylobacter pylori), this protein is DNA topoisomerase 1.